Consider the following 388-residue polypeptide: Formate-dependent phosphoribosylglycinamide formyltransferase (388 aa).

Residues 21–22 (EL) and Glu81 each bind N(1)-(5-phospho-beta-D-ribosyl)glycinamide. ATP-binding positions include Arg113, Lys154, 159 to 164 (SSGHGQ), 193 to 196 (EEFI), and Glu201. Residues 118-306 (KFAAEELGLK…EFALHVRAVL (189 aa)) enclose the ATP-grasp domain. 2 residues coordinate Mg(2+): Glu265 and Glu277. N(1)-(5-phospho-beta-D-ribosyl)glycinamide-binding positions include Asp284, Lys352, and 359-360 (RR).

The protein belongs to the PurK/PurT family. In terms of assembly, homodimer.

The catalysed reaction is N(1)-(5-phospho-beta-D-ribosyl)glycinamide + formate + ATP = N(2)-formyl-N(1)-(5-phospho-beta-D-ribosyl)glycinamide + ADP + phosphate + H(+). The protein operates within purine metabolism; IMP biosynthesis via de novo pathway; N(2)-formyl-N(1)-(5-phospho-D-ribosyl)glycinamide from N(1)-(5-phospho-D-ribosyl)glycinamide (formate route): step 1/1. Involved in the de novo purine biosynthesis. Catalyzes the transfer of formate to 5-phospho-ribosyl-glycinamide (GAR), producing 5-phospho-ribosyl-N-formylglycinamide (FGAR). Formate is provided by PurU via hydrolysis of 10-formyl-tetrahydrofolate. This chain is Formate-dependent phosphoribosylglycinamide formyltransferase, found in Nitratiruptor sp. (strain SB155-2).